The chain runs to 362 residues: MALSMDNIVISNEEEICMMKAMHLPCGLYLNMVLKAAIELDLFEIIAKSTTQKLSSYEIASQIPTKNPNASSLVLERILRFLASQSLLTCNITKNDDGNVHTTYNLTPLSQSLISDKDGTSIAPFLLLATDPVGVHACFHLKDAILEGEIPFNKAHGVHAFEYHGKDSRMNGLFNKAMQNLTCIEMKRIVECYNGFQGVKEIIDVGGGLGISLASIISKYPNIKGINFDLPHVIKDAPTYEGIEHVGGDMWDSIPQGELIILKAVLHSLDDEDCVKILKNCWRALPNDGKVVVIEQIQPKYPETNLLSKRSFSFDISMMIMFHGGKERTKQQFEDLAKQAGFTYIKVVARAYYSWLIELYKY.

D229 is an S-adenosyl-L-methionine binding site. The active-site Proton acceptor is H267.

It belongs to the class I-like SAM-binding methyltransferase superfamily. Cation-independent O-methyltransferase family. Homodimer. As to expression, mainly expressed in leaves secreting glandular trichomes types 1 and 4 and, to a lesser extent, in storage trichomes type 6.

It carries out the reaction myricetin + S-adenosyl-L-methionine = laricitrin + S-adenosyl-L-homocysteine + H(+). It catalyses the reaction laricitrin + S-adenosyl-L-methionine = syringetin + S-adenosyl-L-homocysteine + H(+). The enzyme catalyses a 3'-hydroxyflavone + S-adenosyl-L-methionine = a 3'-methoxyflavone + S-adenosyl-L-homocysteine + H(+). The catalysed reaction is a 5'-hydroxy-3'-methoxyflavone + S-adenosyl-L-methionine = a 3',5'-dimethoxyflavone + S-adenosyl-L-homocysteine + H(+). It carries out the reaction quercetin + S-adenosyl-L-methionine = isorhamnetin + S-adenosyl-L-homocysteine + H(+). It catalyses the reaction rhamnetin + S-adenosyl-L-methionine = rhamnacene + S-adenosyl-L-homocysteine + H(+). The enzyme catalyses 3',4',5,7-tetrahydroxy-3-methoxyflavone + S-adenosyl-L-methionine = 3,3'-O-dimethylquercetin + S-adenosyl-L-homocysteine + H(+). It functions in the pathway flavonoid metabolism. In terms of biological role, flavonoid 3'/5'-O-methyltransferase involved in the biosynthesis of polymethoxylated flavonoids natural products such as myricetin derivatives, aroma compounds possessing antioxidant properties and exhibiting pharmacological activities such as anti-carcinogen, anti-viral, anti-thrombotic, anti-diabetic, anti-atherosclerotic, and anti-inflammatory effects. Catalyzes S-adenosylmethionine-dependent regioselective 3'/5'-O-methylation of flavonoids; active on various hydroxylated flavonoid substrates, including myricetin and quercetin, but inactive toward kaempferol. Mediates the formation of 3'-methyl derivatives from quercetin, myricetin, 3-methyl quercetin and 7-methyl quercetin (rhamnetin), producing 3'-methyl quercetin (isorhamnetin), 3'-methyl myricetin (laricitrin), 3,3'-dimethyl quercetin (3-O-methylisorhamnetin) and 7,3'-dimethyl quercetin (7-O-methylisorhamnetin), respectively. Triggers the 5'-O-methylation of 3'-methyl myricetin (laricitrin), thus leading to production of 3',5'-dimethyl myricetin (syringetin). This chain is Myricetin 3'/5'-O-methyltransferase 1, found in Solanum habrochaites (Wild tomato).